Here is a 176-residue protein sequence, read N- to C-terminus: NAD(P)H-quinone oxidoreductase subunit 6, chloroplastic (176 aa).

The next 5 helical transmembrane spans lie at 10–30 (FLLV…VLLP), 32–52 (PIFS…LYIL), 61–81 (AQLL…VMFM), 92–112 (LWTV…FSLI), and 152–172 (FFLP…GAIS).

The protein belongs to the complex I subunit 6 family. In terms of assembly, NDH is composed of at least 16 different subunits, 5 of which are encoded in the nucleus.

The protein localises to the plastid. Its subcellular location is the chloroplast thylakoid membrane. It carries out the reaction a plastoquinone + NADH + (n+1) H(+)(in) = a plastoquinol + NAD(+) + n H(+)(out). The catalysed reaction is a plastoquinone + NADPH + (n+1) H(+)(in) = a plastoquinol + NADP(+) + n H(+)(out). Its function is as follows. NDH shuttles electrons from NAD(P)H:plastoquinone, via FMN and iron-sulfur (Fe-S) centers, to quinones in the photosynthetic chain and possibly in a chloroplast respiratory chain. The immediate electron acceptor for the enzyme in this species is believed to be plastoquinone. Couples the redox reaction to proton translocation, and thus conserves the redox energy in a proton gradient. The chain is NAD(P)H-quinone oxidoreductase subunit 6, chloroplastic (ndhG) from Lobularia maritima (Sweet alyssum).